The primary structure comprises 385 residues: 8-amino-7-oxononanoate synthase (385 aa).

R23 contributes to the substrate binding site. 110–111 (GF) is a binding site for pyridoxal 5'-phosphate. Residue H135 coordinates substrate. The pyridoxal 5'-phosphate site is built by S180, H208, and T234. K237 carries the N6-(pyridoxal phosphate)lysine modification. T350 serves as a coordination point for substrate.

This sequence belongs to the class-II pyridoxal-phosphate-dependent aminotransferase family. BioF subfamily. Homodimer. The cofactor is pyridoxal 5'-phosphate.

It catalyses the reaction 6-carboxyhexanoyl-[ACP] + L-alanine + H(+) = (8S)-8-amino-7-oxononanoate + holo-[ACP] + CO2. It functions in the pathway cofactor biosynthesis; biotin biosynthesis. Catalyzes the decarboxylative condensation of pimeloyl-[acyl-carrier protein] and L-alanine to produce 8-amino-7-oxononanoate (AON), [acyl-carrier protein], and carbon dioxide. The chain is 8-amino-7-oxononanoate synthase from Vibrio vulnificus (strain YJ016).